The following is a 37-amino-acid chain: Non-specific lipid-transfer protein P4 (37 aa).

This sequence belongs to the plant LTP family.

It is found in the secreted. Plant non-specific lipid-transfer proteins transfer phospholipids as well as galactolipids across membranes. May play a role in wax or cutin deposition in the cell walls of expanding epidermal cells and certain secretory tissues. The chain is Non-specific lipid-transfer protein P4 from Vitis sp. (Grape).